The following is a 138-amino-acid chain: Ribosome-binding factor A (138 aa).

The protein belongs to the RbfA family. As to quaternary structure, monomer. Binds 30S ribosomal subunits, but not 50S ribosomal subunits or 70S ribosomes.

It localises to the cytoplasm. Its function is as follows. One of several proteins that assist in the late maturation steps of the functional core of the 30S ribosomal subunit. Associates with free 30S ribosomal subunits (but not with 30S subunits that are part of 70S ribosomes or polysomes). Required for efficient processing of 16S rRNA. May interact with the 5'-terminal helix region of 16S rRNA. This Paracoccus denitrificans (strain Pd 1222) protein is Ribosome-binding factor A.